A 497-amino-acid chain; its full sequence is Homeotic protein empty spiracles (497 aa).

Disordered regions lie at residues 34–117 (NDVS…HLSP), 161–262 (SPLQ…MMMP), and 441–497 (NRRT…DASH). A compositionally biased stretch (polar residues) spans 35 to 50 (DVSTAGGNSTPDLSGP). Residues 51 to 68 (QSPPPGERNVPGSPPQTP) are compositionally biased toward pro residues. Residues 96–117 (PHAQQQQQQHLQAPHPHPHLSP) are compositionally biased toward low complexity. Over residues 161-176 (SPLQTRLSPETEQPQM) the composition is skewed to polar residues. 2 stretches are compositionally biased toward low complexity: residues 208–239 (PKSV…QQQQ) and 248–262 (PAMM…MMMP). Residues 391–450 (PKRIRTAFSPSQLLKLEHAFESNQYVVGAERKALAQNLNLSETQVKVWFQNRRTKHKRMQ) constitute a DNA-binding region (homeobox). Positions 470-497 (GDEDDDELIDMEMDECPSDEEHELDASH) are enriched in acidic residues.

This sequence belongs to the EMX homeobox family.

The protein resides in the nucleus. Functionally, acts as a homeotic selector gene controlling antennal and mandibular segment identity. This chain is Homeotic protein empty spiracles (ems), found in Drosophila melanogaster (Fruit fly).